The primary structure comprises 333 residues: Autoinducer 2 import system permease protein LsrC (333 aa).

Transmembrane regions (helical) follow at residues Leu-14 to Leu-34, Leu-39 to Leu-59, Ile-70 to Val-90, Leu-93 to Leu-113, Ile-115 to Leu-135, Leu-157 to Leu-177, Ile-206 to Ala-226, Gly-252 to Leu-272, and Leu-284 to Asp-304.

It belongs to the binding-protein-dependent transport system permease family. AraH/RbsC subfamily. As to quaternary structure, the complex is composed of two ATP-binding proteins (LsrA), two transmembrane proteins (LsrC and LsrD) and a solute-binding protein (LsrB).

The protein localises to the cell inner membrane. Its function is as follows. Part of the ABC transporter complex LsrABCD involved in autoinducer 2 (AI-2) import. Probably responsible for the translocation of the substrate across the membrane. In Photorhabdus laumondii subsp. laumondii (strain DSM 15139 / CIP 105565 / TT01) (Photorhabdus luminescens subsp. laumondii), this protein is Autoinducer 2 import system permease protein LsrC (lsrC).